The following is a 547-amino-acid chain: Probable protein kinase UbiB (547 aa).

Residues 121 to 501 (EFSPDPMASA…QLRSERRWRR (381 aa)) enclose the Protein kinase domain. Residues 127–135 (MASASVAQV) and K149 each bind ATP. D284 (proton acceptor) is an active-site residue. 2 helical membrane passes run 502–522 (GFIA…HAGQ) and 523–543 (WLAD…GVML).

Belongs to the ABC1 family. UbiB subfamily.

The protein resides in the cell inner membrane. The protein operates within cofactor biosynthesis; ubiquinone biosynthesis [regulation]. Functionally, is probably a protein kinase regulator of UbiI activity which is involved in aerobic coenzyme Q (ubiquinone) biosynthesis. The protein is Probable protein kinase UbiB of Marinobacter nauticus (strain ATCC 700491 / DSM 11845 / VT8) (Marinobacter aquaeolei).